Reading from the N-terminus, the 447-residue chain is Trigger factor (447 aa).

In terms of domain architecture, PPIase FKBP-type spans 159–244 (GDMLLMQVES…VREIKEEKLP (86 aa)).

This sequence belongs to the FKBP-type PPIase family. Tig subfamily.

It localises to the cytoplasm. It catalyses the reaction [protein]-peptidylproline (omega=180) = [protein]-peptidylproline (omega=0). In terms of biological role, involved in protein export. Acts as a chaperone by maintaining the newly synthesized protein in an open conformation. Functions as a peptidyl-prolyl cis-trans isomerase. The polypeptide is Trigger factor (Dehalococcoides mccartyi (strain ATCC BAA-2100 / JCM 16839 / KCTC 5957 / BAV1)).